The following is a 388-amino-acid chain: Succinate--CoA ligase [ADP-forming] subunit beta (388 aa).

An ATP-grasp domain is found at 9-244 (KEILRKYNVP…LDEEDANEIE (236 aa)). ATP is bound by residues Lys-46, 53 to 55 (GRG), Glu-99, Ala-102, and Glu-107. The Mg(2+) site is built by Asn-199 and Asp-213. Substrate contacts are provided by residues Asn-264 and 321–323 (GIM).

It belongs to the succinate/malate CoA ligase beta subunit family. In terms of assembly, heterotetramer of two alpha and two beta subunits. Requires Mg(2+) as cofactor.

The catalysed reaction is succinate + ATP + CoA = succinyl-CoA + ADP + phosphate. It catalyses the reaction GTP + succinate + CoA = succinyl-CoA + GDP + phosphate. It functions in the pathway carbohydrate metabolism; tricarboxylic acid cycle; succinate from succinyl-CoA (ligase route): step 1/1. Functionally, succinyl-CoA synthetase functions in the citric acid cycle (TCA), coupling the hydrolysis of succinyl-CoA to the synthesis of either ATP or GTP and thus represents the only step of substrate-level phosphorylation in the TCA. The beta subunit provides nucleotide specificity of the enzyme and binds the substrate succinate, while the binding sites for coenzyme A and phosphate are found in the alpha subunit. This chain is Succinate--CoA ligase [ADP-forming] subunit beta, found in Cupriavidus necator (strain ATCC 17699 / DSM 428 / KCTC 22496 / NCIMB 10442 / H16 / Stanier 337) (Ralstonia eutropha).